We begin with the raw amino-acid sequence, 390 residues long: Acid protease (390 aa).

Residues Met1–Ala18 form the signal peptide. The 312-residue stretch at Tyr75–Ala386 folds into the Peptidase A1 domain. Residues Asp93 and Asp282 contribute to the active site.

The protein belongs to the peptidase A1 family.

The sequence is that of Acid protease (PEP1) from Saccharomycopsis fibuligera (Yeast).